The chain runs to 150 residues: Globin-5 (150 aa).

In terms of domain architecture, Globin spans proline 11–tyrosine 150. 2 residues coordinate heme b: histidine 74 and histidine 106.

Belongs to the globin family. Monomer at high oxygen tension and high pH and dimeric at low oxygen tension and lower pH.

The chain is Globin-5 from Petromyzon marinus (Sea lamprey).